The sequence spans 386 residues: Orphan methyltransferase M.SssI (386 aa).

Residues 11-386 (LRVFEAFAGI…LEAIIDKIGG (376 aa)) form the SAM-dependent MTase C5-type domain. Cys141 is a catalytic residue.

The protein belongs to the class I-like SAM-binding methyltransferase superfamily. C5-methyltransferase family.

The catalysed reaction is a 2'-deoxycytidine in DNA + S-adenosyl-L-methionine = a 5-methyl-2'-deoxycytidine in DNA + S-adenosyl-L-homocysteine + H(+). In terms of biological role, this de novo methylase acts completely and exclusively on CG residues in DNA; methylates unmethylated and hemi-methylated DNA. The chain is Orphan methyltransferase M.SssI (sssIM) from Spiroplasma monobiae (strain ATCC 33825 / MQ-1).